Reading from the N-terminus, the 381-residue chain is Mannitol-1-phosphate 5-dehydrogenase (381 aa).

3-14 is a binding site for NAD(+); that stretch reads AVHFGAGNIGRG.

The protein belongs to the mannitol dehydrogenase family.

It catalyses the reaction D-mannitol 1-phosphate + NAD(+) = beta-D-fructose 6-phosphate + NADH + H(+). The chain is Mannitol-1-phosphate 5-dehydrogenase from Photobacterium profundum (strain SS9).